A 387-amino-acid polypeptide reads, in one-letter code: Phosphoglycerate kinase (387 aa).

Substrate is bound by residues 21–23 (DLN), Arg36, 59–62 (HLGR), Arg113, and Arg146. Residues Lys197, Glu314, and 340 to 343 (GGDT) contribute to the ATP site.

This sequence belongs to the phosphoglycerate kinase family. In terms of assembly, monomer.

It is found in the cytoplasm. The enzyme catalyses (2R)-3-phosphoglycerate + ATP = (2R)-3-phospho-glyceroyl phosphate + ADP. The protein operates within carbohydrate degradation; glycolysis; pyruvate from D-glyceraldehyde 3-phosphate: step 2/5. In Yersinia pestis bv. Antiqua (strain Antiqua), this protein is Phosphoglycerate kinase.